Reading from the N-terminus, the 329-residue chain is Ankyrin repeat and SOCS box protein 5 (329 aa).

ANK repeat units lie at residues 69 to 98, 102 to 131, 135 to 164, 167 to 196, 200 to 229, and 232 to 261; these read ADRSPLHEAASQGRLLALRTLLSQGYNVNA, DHVTPLHEACLGDHVACARTLLEAGANANA, DGVTPLFNACSQGSASCAELLLEYGAKAQL, CFPSPTHEAASKGHHECLDILIAWGIDVDQ, HLGTPLYVACMSQQFHCIWKLLYAGADVHK, and YWDTPLHAAAQQPSTEIVNLLLEFGADINA. The SOCS box domain occupies 278–329; the sequence is AVERILLQHEATPSSLCQLCRLCIRNYIGRQRFHLIPQLQLPTLLQNFLQYR.

Belongs to the ankyrin SOCS box (ASB) family.

It functions in the pathway protein modification; protein ubiquitination. In terms of biological role, may be a substrate-recognition component of a SCF-like ECS (Elongin-Cullin-SOCS-box protein) E3 ubiquitin-protein ligase complex which mediates the ubiquitination and subsequent proteasomal degradation of target proteins. May play a role in the initiation of arteriogenesis. The sequence is that of Ankyrin repeat and SOCS box protein 5 (Asb5) from Mus musculus (Mouse).